The following is a 178-amino-acid chain: Co-chaperone protein p23-1 (178 aa).

The CS domain maps to 2 to 91 (SRHPTVKWAQ…AESKWWNRLT (90 aa)). 2 stretches are compositionally biased toward acidic residues: residues 112–126 (DDED…DFGD) and 136–155 (DTDE…EGET). The disordered stretch occupies residues 112-178 (DDEDKGGEGD…DEEGVNAKKD (67 aa)). A compositionally biased stretch (basic and acidic residues) spans 157-178 (AETKEKKIDGEKDEEGVNAKKD).

This sequence belongs to the p23/wos2 family. In terms of assembly, interacts with HSP90 in an ATP-dependent manner.

In terms of biological role, acts as a co-chaperone for HSP90. The sequence is that of Co-chaperone protein p23-1 from Brassica napus (Rape).